A 388-amino-acid chain; its full sequence is MKHLQRFFSSDASGGIILIIAAALAMLMANMGATSGWYHHFLETPVQLRVGALEINKNMLLWINDALMAVFFLLIGLEVKRELLQGSLASLRQAVFPVIAAIGGMIVPALLYLAFNYSDPVTREGWAIPAATDIAFALGVLALLGSRVPLALKIFLMALAIIDDLGAIIIIALFYTSDLSIVSLGVAAFAIVVLALLNLCGVRRTGVYILVGAILWTAVLKSGVHATLAGVIVGFFIPLKEKHGRSPAKRLEHILHPWVAYLILPLFAFANAGVSLQGVTIDGLTSMLPLGIIAGLLIGKPLGISLFCWLALRFKLAHLPQGTTYQQIMAVGILCGIGFTMSIFIASLAFGNVDPALINWAKLGILIGSLLSAVVGYSWLRARLNAPA.

Helical transmembrane passes span 14–34 (GGII…MGAT), 59–79 (MLLW…GLEV), 95–115 (VFPV…YLAF), 125–145 (GWAI…ALLG), 154–174 (IFLM…IALF), 179–199 (LSIV…LLNL), 219–239 (VLKS…FIPL), 254–274 (ILHP…NAGV), 292–312 (IIAG…WLAL), 328–348 (IMAV…IASL), and 356–376 (ALIN…AVVG).

Belongs to the NhaA Na(+)/H(+) (TC 2.A.33) antiporter family.

The protein resides in the cell inner membrane. The enzyme catalyses Na(+)(in) + 2 H(+)(out) = Na(+)(out) + 2 H(+)(in). Functionally, na(+)/H(+) antiporter that extrudes sodium in exchange for external protons. The sequence is that of Na(+)/H(+) antiporter NhaA from Salmonella arizonae (strain ATCC BAA-731 / CDC346-86 / RSK2980).